Reading from the N-terminus, the 99-residue chain is RNA-binding protein Hfq (99 aa).

The Sm domain occupies 9–68 (DPYLNALRRERIPVSIYLVNGIKLQGQIESFDQFVILLKNTVNQMVYKHAISTVVPARSV). Residues 67–99 (SVSHHNNNAQQQYQQQAAQAASAQSNETSSQAE) are disordered. The segment covering 72–99 (NNNAQQQYQQQAAQAASAQSNETSSQAE) has biased composition (low complexity).

The protein belongs to the Hfq family. In terms of assembly, homohexamer.

Functionally, RNA chaperone that binds small regulatory RNA (sRNAs) and mRNAs to facilitate mRNA translational regulation in response to envelope stress, environmental stress and changes in metabolite concentrations. Also binds with high specificity to tRNAs. This Actinobacillus succinogenes (strain ATCC 55618 / DSM 22257 / CCUG 43843 / 130Z) protein is RNA-binding protein Hfq.